Consider the following 305-residue polypeptide: Major fimbrium anchoring subunit FimB (305 aa).

An N-terminal signal peptide occupies residues 1–22; it reads MNDAKKYIVSVLILLVAGMFGG. A lipid anchor (N-palmitoyl cysteine) is attached at Cys-23. Cys-23 is lipidated: S-diacylglycerol cysteine.

Belongs to the bacteroidetes fimbrillin superfamily. FimB/Mfa2 family. In terms of assembly, fimB is not part of the fimbrium itself, but anchors the fimbrium in the outer membrane. Linear, head-to-tail oligomerization of fimbrial subunits mediates assembly of the fimbrium stalk, while the minor components FimC, FimD and FimE probably form the fimbrium tip. The anchoring subunit FimB limits fimbrium length and is important for solid fimbrium attachment to the outer membrane. In its absence, the major fimbriae become very long and are easily detached from the membrane.

The protein localises to the cell outer membrane. Anchoring subunit of the major fimbriae. Regulates fimbrial length. These filamentous pili are attached to the cell surface; they mediate biofilm formation, adhesion onto host cells and onto other bacteria that are part of the oral microbiome. Fimbriae of P.gingivalis are major virulence factors. The chain is Major fimbrium anchoring subunit FimB from Porphyromonas gingivalis (Bacteroides gingivalis).